Consider the following 353-residue polypeptide: S-adenosylmethionine:tRNA ribosyltransferase-isomerase (353 aa).

Belongs to the QueA family. In terms of assembly, monomer.

Its subcellular location is the cytoplasm. The enzyme catalyses 7-aminomethyl-7-carbaguanosine(34) in tRNA + S-adenosyl-L-methionine = epoxyqueuosine(34) in tRNA + adenine + L-methionine + 2 H(+). It participates in tRNA modification; tRNA-queuosine biosynthesis. In terms of biological role, transfers and isomerizes the ribose moiety from AdoMet to the 7-aminomethyl group of 7-deazaguanine (preQ1-tRNA) to give epoxyqueuosine (oQ-tRNA). The sequence is that of S-adenosylmethionine:tRNA ribosyltransferase-isomerase from Maricaulis maris (strain MCS10) (Caulobacter maris).